A 256-amino-acid chain; its full sequence is 5-keto-4-deoxy-D-glucarate aldolase (256 aa).

His50 serves as the catalytic Proton acceptor. Gln151 is a substrate binding site. Glu153 contacts Mg(2+). Substrate-binding residues include Ser178 and Asp179. Asp179 provides a ligand contact to Mg(2+).

The protein belongs to the HpcH/HpaI aldolase family. KDGluc aldolase subfamily. In terms of assembly, homohexamer; trimer of dimers. The cofactor is Mg(2+).

It carries out the reaction 5-dehydro-4-deoxy-D-glucarate = 2-hydroxy-3-oxopropanoate + pyruvate. It catalyses the reaction 2-dehydro-3-deoxy-D-glucarate = 2-hydroxy-3-oxopropanoate + pyruvate. Its pathway is carbohydrate acid metabolism; galactarate degradation; D-glycerate from galactarate: step 2/3. Catalyzes the reversible retro-aldol cleavage of both 5-keto-4-deoxy-D-glucarate and 2-keto-3-deoxy-D-glucarate to pyruvate and tartronic semialdehyde. In Salmonella arizonae (strain ATCC BAA-731 / CDC346-86 / RSK2980), this protein is 5-keto-4-deoxy-D-glucarate aldolase.